Consider the following 468-residue polypeptide: Siroheme synthase (468 aa).

The tract at residues 1–202 (MDYLPLFARL…EQHDSAEQWM (202 aa)) is precorrin-2 dehydrogenase /sirohydrochlorin ferrochelatase. NAD(+) is bound by residues 22 to 23 (DI) and 43 to 44 (PS). A Phosphoserine modification is found at Ser126. The interval 214–468 (GEIVLVGAGP…SGKEHLINLA (255 aa)) is uroporphyrinogen-III C-methyltransferase. Residue Pro223 coordinates S-adenosyl-L-methionine. Asp246 (proton acceptor) is an active-site residue. Lys268 serves as the catalytic Proton donor. Residues 299 to 301 (GGD), 329 to 330 (TA), Met381, and Gly410 contribute to the S-adenosyl-L-methionine site.

This sequence in the N-terminal section; belongs to the precorrin-2 dehydrogenase / sirohydrochlorin ferrochelatase family. The protein in the C-terminal section; belongs to the precorrin methyltransferase family.

It catalyses the reaction uroporphyrinogen III + 2 S-adenosyl-L-methionine = precorrin-2 + 2 S-adenosyl-L-homocysteine + H(+). The enzyme catalyses precorrin-2 + NAD(+) = sirohydrochlorin + NADH + 2 H(+). The catalysed reaction is siroheme + 2 H(+) = sirohydrochlorin + Fe(2+). Its pathway is cofactor biosynthesis; adenosylcobalamin biosynthesis; precorrin-2 from uroporphyrinogen III: step 1/1. It functions in the pathway cofactor biosynthesis; adenosylcobalamin biosynthesis; sirohydrochlorin from precorrin-2: step 1/1. The protein operates within porphyrin-containing compound metabolism; siroheme biosynthesis; precorrin-2 from uroporphyrinogen III: step 1/1. It participates in porphyrin-containing compound metabolism; siroheme biosynthesis; siroheme from sirohydrochlorin: step 1/1. Its pathway is porphyrin-containing compound metabolism; siroheme biosynthesis; sirohydrochlorin from precorrin-2: step 1/1. Multifunctional enzyme that catalyzes the SAM-dependent methylations of uroporphyrinogen III at position C-2 and C-7 to form precorrin-2 via precorrin-1. Then it catalyzes the NAD-dependent ring dehydrogenation of precorrin-2 to yield sirohydrochlorin. Finally, it catalyzes the ferrochelation of sirohydrochlorin to yield siroheme. This is Siroheme synthase from Tolumonas auensis (strain DSM 9187 / NBRC 110442 / TA 4).